We begin with the raw amino-acid sequence, 291 residues long: tRNA-cytidine(32) 2-sulfurtransferase (291 aa).

The short motif at 36-41 (SGGKDS) is the PP-loop motif element. 3 residues coordinate [4Fe-4S] cluster: cysteine 111, cysteine 114, and cysteine 202. The tract at residues 259-291 (DPWLDAEDEEAEDCGEPSAGDGVVSLGGARGGR) is disordered. The segment covering 262–273 (LDAEDEEAEDCG) has biased composition (acidic residues).

This sequence belongs to the TtcA family. Homodimer. It depends on Mg(2+) as a cofactor. [4Fe-4S] cluster serves as cofactor.

The protein localises to the cytoplasm. It carries out the reaction cytidine(32) in tRNA + S-sulfanyl-L-cysteinyl-[cysteine desulfurase] + AH2 + ATP = 2-thiocytidine(32) in tRNA + L-cysteinyl-[cysteine desulfurase] + A + AMP + diphosphate + H(+). It participates in tRNA modification. Functionally, catalyzes the ATP-dependent 2-thiolation of cytidine in position 32 of tRNA, to form 2-thiocytidine (s(2)C32). The sulfur atoms are provided by the cysteine/cysteine desulfurase (IscS) system. The chain is tRNA-cytidine(32) 2-sulfurtransferase from Anaeromyxobacter sp. (strain K).